The chain runs to 609 residues: UvrABC system protein C (609 aa).

The 79-residue stretch at His13 to Val91 folds into the GIY-YIG domain. A UVR domain is found at Gln201 to Val236.

Belongs to the UvrC family. Interacts with UvrB in an incision complex.

It localises to the cytoplasm. Its function is as follows. The UvrABC repair system catalyzes the recognition and processing of DNA lesions. UvrC both incises the 5' and 3' sides of the lesion. The N-terminal half is responsible for the 3' incision and the C-terminal half is responsible for the 5' incision. The protein is UvrABC system protein C of Histophilus somni (strain 129Pt) (Haemophilus somnus).